The chain runs to 349 residues: MTATTATAPAMRGGGRNELPPHLDDNLLTPRFYTTEFDKAAKTDLDIARKDFEAMFKEMEADYNLKHFDRKASLERLADLSPEDKAIYESYLVRSVVSEFSGFLLFKEISNRFKKAGRQELGQFFTFLARDEARHAGFLGRALKAEGINVDLPNLGNKRAPTFFPLSWVLYSLYLSEKIGYWRYILINRHLNDNPEKVCAPLFDFFEPWCQDENRHGDCINLMMRCWPGMTKGFRGKLLSRFFLWSVFLTHTLTVCERGDFYGLLGIDPVLFDEEVIVQTNNTSRNAFPWVYNFDDGKFLEMRMQILKAFRNWRESSGLAKPVALSKFVSLILRQFALPMQKTNAVRYG.

Low complexity predominate over residues 1-10 (MTATTATAPA). The interval 1–23 (MTATTATAPAMRGGGRNELPPHL) is disordered.

The protein belongs to the AcsF family. It depends on Fe cation as a cofactor.

It catalyses the reaction Mg-protoporphyrin IX 13-monomethyl ester + 3 NADPH + 3 O2 + 2 H(+) = 3,8-divinyl protochlorophyllide a + 3 NADP(+) + 5 H2O. It participates in porphyrin-containing compound metabolism; chlorophyll biosynthesis (light-independent). In terms of biological role, catalyzes the formation of the isocyclic ring in chlorophyll biosynthesis. Mediates the cyclase reaction, which results in the formation of divinylprotochlorophyllide (Pchlide) characteristic of all chlorophylls from magnesium-protoporphyrin IX 13-monomethyl ester (MgPMME). This Prochlorococcus marinus (strain MIT 9303) protein is Magnesium-protoporphyrin IX monomethyl ester [oxidative] cyclase.